The sequence spans 108 residues: Phosphoribosyl-AMP cyclohydrolase (108 aa).

Position 78 (D78) interacts with Mg(2+). Zn(2+) is bound at residue C79. D80 and D82 together coordinate Mg(2+). 2 residues coordinate Zn(2+): C95 and C102.

Belongs to the PRA-CH family. Homodimer. Mg(2+) is required as a cofactor. It depends on Zn(2+) as a cofactor.

It is found in the cytoplasm. The enzyme catalyses 1-(5-phospho-beta-D-ribosyl)-5'-AMP + H2O = 1-(5-phospho-beta-D-ribosyl)-5-[(5-phospho-beta-D-ribosylamino)methylideneamino]imidazole-4-carboxamide. Its pathway is amino-acid biosynthesis; L-histidine biosynthesis; L-histidine from 5-phospho-alpha-D-ribose 1-diphosphate: step 3/9. Functionally, catalyzes the hydrolysis of the adenine ring of phosphoribosyl-AMP. The polypeptide is Phosphoribosyl-AMP cyclohydrolase (Cenarchaeum symbiosum (strain A)).